We begin with the raw amino-acid sequence, 398 residues long: 1-deoxy-D-xylulose 5-phosphate reductoisomerase (398 aa).

NADPH is bound by residues Thr-10, Gly-11, Ser-12, Ile-13, Gly-36, Lys-37, Asn-38, and Asn-124. Residue Lys-125 participates in 1-deoxy-D-xylulose 5-phosphate binding. Glu-126 is a binding site for NADPH. Asp-150 lines the Mn(2+) pocket. 1-deoxy-D-xylulose 5-phosphate contacts are provided by Ser-151, Glu-152, Ser-186, and His-209. Glu-152 lines the Mn(2+) pocket. Gly-215 is an NADPH binding site. Positions 222, 227, 228, and 231 each coordinate 1-deoxy-D-xylulose 5-phosphate. Mn(2+) is bound at residue Glu-231.

Belongs to the DXR family. Homodimer. Mg(2+) is required as a cofactor. Requires Mn(2+) as cofactor.

It catalyses the reaction 2-C-methyl-D-erythritol 4-phosphate + NADP(+) = 1-deoxy-D-xylulose 5-phosphate + NADPH + H(+). The protein operates within isoprenoid biosynthesis; isopentenyl diphosphate biosynthesis via DXP pathway; isopentenyl diphosphate from 1-deoxy-D-xylulose 5-phosphate: step 1/6. In terms of biological role, catalyzes the NADPH-dependent rearrangement and reduction of 1-deoxy-D-xylulose-5-phosphate (DXP) to 2-C-methyl-D-erythritol 4-phosphate (MEP). In Escherichia coli O157:H7, this protein is 1-deoxy-D-xylulose 5-phosphate reductoisomerase.